We begin with the raw amino-acid sequence, 520 residues long: Nonsense-mediated mRNA decay factor SMG9 (520 aa).

A disordered region spans residues 1–143 (MSESGHSQPG…KGEKEGQRPT (143 aa)). Ser-2 bears the N-acetylserine mark. Phosphoserine is present on residues Ser-2, Ser-4, Ser-7, Ser-32, and Ser-53. Over residues 36-53 (GRERDYIAPWERERRDGS) the composition is skewed to basic and acidic residues. Over residues 78 to 94 (QPPPPAAPAAPPAPAPL) the composition is skewed to pro residues. A compositionally biased stretch (low complexity) spans 109 to 121 (GPAATTSTSTPEG). Residues 122–133 (TAPPPPAAPVPP) show a composition bias toward pro residues. Ser-451 is modified (phosphoserine).

This sequence belongs to the SMG9 family. In terms of assembly, self-associates to form homodimers and forms heterodimers with SMG8; these assembly forms may represent SMG1C intermediate forms. Component of the SMG1C complex composed of SMG1, SMG8 and SMG9. Self-associates to form homodimers and forms heterodimers with SMG8; these assembly forms may represent SMG1C intermediate forms. Interacts with DHX34; the interaction is RNA-independent. In terms of processing, phosphorylated by SMG1.

Functionally, involved in nonsense-mediated decay (NMD) of mRNAs containing premature stop codons. Is recruited by release factors to stalled ribosomes together with SMG1 and SMG8 (forming the SMG1C protein kinase complex) and, in the SMG1C complex, is required for the efficient association between SMG1 and SMG8. Plays a role in brain, heart, and eye development. The protein is Nonsense-mediated mRNA decay factor SMG9 of Bos taurus (Bovine).